The following is a 737-amino-acid chain: Phosphoribosylformylglycinamidine synthase subunit PurL (737 aa).

H50 is an active-site residue. 2 residues coordinate ATP: Y53 and K92. Position 94 (E94) interacts with Mg(2+). Substrate-binding positions include 95 to 98 and R117; that span reads SHNH. Catalysis depends on H96, which acts as the Proton acceptor. D118 is a binding site for Mg(2+). Q241 serves as a coordination point for substrate. D269 is a binding site for Mg(2+). 313–315 lines the substrate pocket; sequence ESQ. Residues D495 and G532 each contribute to the ATP site. A Mg(2+)-binding site is contributed by N533. S535 contacts substrate.

It belongs to the FGAMS family. Monomer. Part of the FGAM synthase complex composed of 1 PurL, 1 PurQ and 2 PurS subunits.

The protein localises to the cytoplasm. The enzyme catalyses N(2)-formyl-N(1)-(5-phospho-beta-D-ribosyl)glycinamide + L-glutamine + ATP + H2O = 2-formamido-N(1)-(5-O-phospho-beta-D-ribosyl)acetamidine + L-glutamate + ADP + phosphate + H(+). The protein operates within purine metabolism; IMP biosynthesis via de novo pathway; 5-amino-1-(5-phospho-D-ribosyl)imidazole from N(2)-formyl-N(1)-(5-phospho-D-ribosyl)glycinamide: step 1/2. Part of the phosphoribosylformylglycinamidine synthase complex involved in the purines biosynthetic pathway. Catalyzes the ATP-dependent conversion of formylglycinamide ribonucleotide (FGAR) and glutamine to yield formylglycinamidine ribonucleotide (FGAM) and glutamate. The FGAM synthase complex is composed of three subunits. PurQ produces an ammonia molecule by converting glutamine to glutamate. PurL transfers the ammonia molecule to FGAR to form FGAM in an ATP-dependent manner. PurS interacts with PurQ and PurL and is thought to assist in the transfer of the ammonia molecule from PurQ to PurL. The sequence is that of Phosphoribosylformylglycinamidine synthase subunit PurL from Bartonella bacilliformis (strain ATCC 35685 / KC583 / Herrer 020/F12,63).